Reading from the N-terminus, the 480-residue chain is ATP-dependent rRNA helicase RRP3 (480 aa).

Composition is skewed to basic and acidic residues over residues 1-17 (MAKA…KEES) and 33-46 (DTTK…EPKK). The disordered stretch occupies residues 1–63 (MAKATEKRVK…VEVDESEEQT (63 aa)). A Q motif motif is present at residues 64 to 92 (KTFKDLGVIDSICETCEELKFTKPTPIQA). The Helicase ATP-binding domain occupies 95–266 (IPYALEGRDI…RASLVDPVRV (172 aa)). ATP is bound at residue 108 to 115 (AQTGSGKT). A DEAD box motif is present at residues 214-217 (DEAD). In terms of domain architecture, Helicase C-terminal spans 277–437 (NLLQYMVFCP…SYPLESEAVM (161 aa)). The disordered stretch occupies residues 450–480 (AIQEMKGEDGTKKRSKFDKKRRRDEMDIGEQ). The segment covering 462–471 (KRSKFDKKRR) has biased composition (basic residues).

This sequence belongs to the DEAD box helicase family. DDX47/RRP3 subfamily. As to quaternary structure, interacts with the SSU processome.

It localises to the nucleus. It carries out the reaction ATP + H2O = ADP + phosphate + H(+). ATP-dependent rRNA helicase required for pre-ribosomal RNA processing. Involved in the maturation of the 35S-pre-rRNA and to its cleavage to mature 18S rRNA. This is ATP-dependent rRNA helicase RRP3 from Yarrowia lipolytica (strain CLIB 122 / E 150) (Yeast).